The sequence spans 839 residues: Transient receptor potential cation channel subfamily V member 1 (839 aa).

The interval 1–60 (MEKWASLDSDESEPPAQENSCPDPPDRDPNSKPPPAKPHIFATRSRTRLFGKGDSEEASP) is disordered. The Cytoplasmic segment spans residues 1-433 (MEKWASLDSD…QDKWDRFVKR (433 aa)). The stretch at 111–139 (RLYDRRSIFDAVAQSNCQELESLLSFLQK) is one ANK 1 repeat. Arg-116 provides a ligand contact to ATP. At Ser-117 the chain carries Phosphoserine; by PKA and PKD. Position 145 is a phosphothreonine; by PKA; in vitro (Thr-145). Residues 154–186 (TGKTCLLKAMLNLHNGQNDTIALLLDIARKTDS) form an ANK 2 repeat. ATP-binding positions include Lys-156, Lys-161, Asn-165, 200-203 (YKGQ), and 211-212 (ER). ANK repeat units follow at residues 204–229 (TALH…ADVQ), 250–277 (ELPL…QPAD), 286–322 (NTVL…KLHP), and 336–359 (TPLA…REIH). Thr-371 bears the Phosphothreonine; by PKA; in vitro mark. One copy of the ANK 7 repeat lies at 394 to 416 (NSVLEVIAYSSSETPNRHDMLLV). The helical transmembrane segment at 434–455 (IFYFNFFVYCLYMIIFTTAAYY) threads the bilayer. Topologically, residues 456-472 (RPVEGLPPYKLNNTVGD) are extracellular. A helical membrane pass occupies residues 473 to 497 (YFRVTGEILSVSGGVYFFFRGIQYF). The Cytoplasmic segment spans residues 498–510 (LQRRPSLKSLFVD). Ser-503 is modified (phosphoserine; by PKC/PRKCE). A helical transmembrane segment spans residues 511-532 (SYSEILFFVQSLFMLVSVVLYF). Resiniferatoxin is bound at residue 512–513 (YS). Residues 533 to 535 (SHR) are Extracellular-facing. A helical transmembrane segment spans residues 536–556 (KEYVASMVFSLAMGWTNMLYY). Positions 551 and 558 each coordinate resiniferatoxin. The Cytoplasmic portion of the chain corresponds to 557–559 (TRG). Residues 560–598 (FQQMGIYAVMIEKMILRDLCRFMFVYLVFLFGFSTAVVT) traverse the membrane as a helical segment. Residues 599 to 630 (LIEDGKNNSLPVESPPHKCRGSACRPGNSYNS) are Extracellular-facing. Residue Asn-605 is glycosylated (N-linked (GlcNAc...) asparagine). An intramembrane region (pore-forming) is located at residues 631–652 (LYSTCLELFKFTIGMGDLEFTE). Gly-644 is a Na(+) binding site. The short motif at 644–647 (GMGD) is the Selectivity filter element. Position 647 (Asp-647) interacts with Ca(2+). Over 653–656 (NYDF) the chain is Extracellular. Residues 657–683 (KAVFIILLLAYVILTYILLLNMLIALM) traverse the membrane as a helical segment. Over 684-839 (GETVNKIAQE…FKDSMAPGEK (156 aa)) the chain is Cytoplasmic. Positions 685 to 713 (ETVNKIAQESKNIWKLQRAITILDTEKSF) are AD. Thr-705 is subject to Phosphothreonine. The interval 768-802 (EGVKRTLSFSLRSGRVSGRNWKNFALVPLLRDAST) is interaction with calmodulin. Ser-775 carries the post-translational modification Phosphoserine. Positions 778-793 (LRSGRVSGRNWKNFAL) are required for PIP2-mediated channel inhibition. Ser-801 is subject to Phosphoserine; by PKC/PRKCE and PKC/PRKCZ. Residues 802–815 (TRDRHSTQPEEVQL) are compositionally biased toward basic and acidic residues. The interval 802-839 (TRDRHSTQPEEVQLKHYTGSLKPEDAEVFKDSMAPGEK) is disordered. Ser-821 is subject to Phosphoserine. Over residues 823–839 (KPEDAEVFKDSMAPGEK) the composition is skewed to basic and acidic residues.

The protein belongs to the transient receptor (TC 1.A.4) family. TrpV subfamily. TRPV1 sub-subfamily. In terms of assembly, homotetramer. May also form a heteromeric channel with TRPV3. Interacts with CALM, PRKCM and CSK. Interacts with PRKCG and NTRK1, probably by forming a trimeric complex. Interacts with PIRT. Interacts with the Scolopendra mutilans RhTx toxin. Interacts with TMEM100. Interacts with PACS2. Phosphorylation by PKA reverses capsaicin-induced dephosphorylation at multiple sites probably including Ser-117 as a major phosphorylation site. Phosphorylation by CAMKII seems to regulate binding to vanilloids. Phosphorylated and modulated by PRKCE, PRKCM and probably PRKCZ. Dephosphorylation by calcineurin seems to lead to receptor desensitization and phosphorylation by CAMKII recovers activity. As to expression, detected in neurons in the root ganglia (at protein level). Detected in dorsal root ganglia.

The protein resides in the postsynaptic cell membrane. It is found in the cell projection. It localises to the dendritic spine membrane. The protein localises to the cell membrane. The enzyme catalyses Ca(2+)(in) = Ca(2+)(out). It catalyses the reaction Mg(2+)(in) = Mg(2+)(out). The catalysed reaction is Na(+)(in) = Na(+)(out). It carries out the reaction K(+)(in) = K(+)(out). The channel is sensitized by ATP binding. Repeated stimulation with capsaicin gives rise to progressively smaller responses, due to desensitization. This desensitization is triggered by the influx of calcium ions and is inhibited by elevated ATP levels. Ca(2+) and CALM displace ATP from its binding site and trigger a conformation change that leads to a closed, desensitized channel. The double-knot toxin (DkTx) from the Chinese earth tiger tarantula activates the channel and traps it in an open conformation. The Scolopendra mutilans RhTx toxin potentiates the heat activation pathway mediated by this channel by binding to the charge-rich outer pore region (in an activated state). Channel activity is activated via the interaction with PIRT and phosphatidylinositol 4,5-bisphosphate (PIP2). Both PIRT and PIP2 are required to activate channel activity. Intracellular PIP2 inhibits desensitization. Non-selective calcium permeant cation channel involved in detection of noxious chemical and thermal stimuli. Seems to mediate proton influx and may be involved in intracellular acidosis in nociceptive neurons. Involved in mediation of inflammatory pain and hyperalgesia. Sensitized by a phosphatidylinositol second messenger system activated by receptor tyrosine kinases, which involves PKC isozymes and PCL. Activation by vanilloids, like capsaicin, and temperatures higher than 42 degrees Celsius. Upon activation, exhibits a time- and Ca(2+)-dependent outward rectification, followed by a long-lasting refractory state. Mild extracellular acidic pH (6.5) potentiates channel activation by noxious heat and vanilloids, whereas acidic conditions (pH &lt;6) directly activate the channel. Can be activated by endogenous compounds, including 12-hydroperoxytetraenoic acid and bradykinin. Acts as ionotropic endocannabinoid receptor with central neuromodulatory effects. Triggers a form of long-term depression (TRPV1-LTD) mediated by the endocannabinoid anandamine in the hippocampus and nucleus accumbens by affecting AMPA receptors endocytosis. This is Transient receptor potential cation channel subfamily V member 1 (Trpv1) from Mus musculus (Mouse).